A 100-amino-acid polypeptide reads, in one-letter code: NADH-quinone oxidoreductase subunit K 1 (100 aa).

3 helical membrane-spanning segments follow: residues 3–23 (IIKAYIILSIALFLIGLLGVI), 28–48 (LITVLVSTELMLNGINLALVA), and 60–80 (IFAFFVLTVAAAEVAVGLGLI).

This sequence belongs to the complex I subunit 4L family. NDH-1 is composed of 14 different subunits. Subunits NuoA, H, J, K, L, M, N constitute the membrane sector of the complex.

The protein resides in the cell inner membrane. It catalyses the reaction a quinone + NADH + 5 H(+)(in) = a quinol + NAD(+) + 4 H(+)(out). In terms of biological role, NDH-1 shuttles electrons from NADH, via FMN and iron-sulfur (Fe-S) centers, to quinones in the respiratory chain. The immediate electron acceptor for the enzyme in this species is believed to be ubiquinone. Couples the redox reaction to proton translocation (for every two electrons transferred, four hydrogen ions are translocated across the cytoplasmic membrane), and thus conserves the redox energy in a proton gradient. In Aquifex aeolicus (strain VF5), this protein is NADH-quinone oxidoreductase subunit K 1.